Reading from the N-terminus, the 187-residue chain is UPF0301 protein YPO0936/y3322/YP_3506 (187 aa).

Belongs to the UPF0301 (AlgH) family.

In Yersinia pestis, this protein is UPF0301 protein YPO0936/y3322/YP_3506.